The following is a 563-amino-acid chain: PTS system fructose-specific EIIB'BC component (563 aa).

2 PTS EIIB type-2 domains span residues methionine 1–alanine 85 and lysine 104–alanine 201. Catalysis depends on cysteine 112, which acts as the Phosphocysteine intermediate; for EIIB activity. At cysteine 112 the chain carries Phosphocysteine; by EIIA. One can recognise a PTS EIIC type-2 domain in the interval alanine 226–lysine 561. 9 consecutive transmembrane segments (helical) span residues tyrosine 236–isoleucine 256, glycine 274–alanine 294, isoleucine 304–phenylalanine 324, isoleucine 349–glycine 369, tryptophan 382–methionine 402, methionine 430–valine 450, glycine 463–alanine 483, valine 489–alanine 509, and leucine 518–isoleucine 538.

Its subcellular location is the cell inner membrane. It catalyses the reaction D-fructose(out) + N(pros)-phospho-L-histidyl-[protein] = D-fructose 1-phosphate(in) + L-histidyl-[protein]. Functionally, the phosphoenolpyruvate-dependent sugar phosphotransferase system (sugar PTS), a major carbohydrate active transport system, catalyzes the phosphorylation of incoming sugar substrates concomitantly with their translocation across the cell membrane. The enzyme II FruAB PTS system is involved in fructose transport. The polypeptide is PTS system fructose-specific EIIB'BC component (Escherichia coli (strain K12)).